Reading from the N-terminus, the 1454-residue chain is E3 ubiquitin-protein ligase substrate receptor MMS22 (1454 aa).

Residues 159–178 (NSSVQSQRYDSDEEIPKKRH) form a disordered region. Positions 1201 to 1454 (YDEGDISRNF…SEPFKTFKNT (254 aa)) are required for interaction with MMS1.

It belongs to the MMS22 family. In terms of assembly, component of a cullin-RING ligase (CRL) composed of 4 subunits: the RING protein HRT1, the cullin RTT101, a linker protein MMS1, and the substrate receptor MMS22. This complex further interacts with RTT107 and CTF4 to form RTT101-MMS1-MMS22-RTT107 and RTT101-MMS1-MMS22-CTF4 complexes respectively. Interacts (via C-ter) with MMS1 (via N-ter). Interacts with RTT107.

It is found in the nucleus. Functionally, substrate targeting component of a cullin-RING-based E3 ubiquitin-protein ligase complex RTT101(MMS1-MMS22). RTT101(MMS1-MMS22) promotes fork progression through damaged DNA or natural pause sites by stabilizing replication proteins like the replication fork-pausing complex (FPC) and leading-strand polymerase at stalled replication forks. RTT101(MMS1-MMS22) ubiquitinates the acetylated histones H3K56ac-H4 at lysine residues H3K121, H3K122 and H3K125. Ubiquitination is required for efficient histone deposition during replication-coupled nucleosome assembly, probably by facilitating the transfer of H3-H4 from ASF1 to other chaperones involved in histone deposition. This is E3 ubiquitin-protein ligase substrate receptor MMS22 (MMS22) from Saccharomyces cerevisiae (strain ATCC 204508 / S288c) (Baker's yeast).